The following is a 158-amino-acid chain: Inorganic pyrophosphatase (158 aa).

Residue glutamate 8 participates in Mg(2+) binding. Substrate is bound by residues lysine 16, arginine 30, and tyrosine 42. Positions 52, 57, 84, and 89 each coordinate Mg(2+). The active-site Proton acceptor is the aspartate 89. A substrate-binding site is contributed by tyrosine 125.

This sequence belongs to the PPase family. Homohexamer. Requires Mg(2+) as cofactor.

It localises to the cytoplasm. It catalyses the reaction diphosphate + H2O = 2 phosphate + H(+). Catalyzes the hydrolysis of inorganic pyrophosphate (PPi) forming two phosphate ions. This is Inorganic pyrophosphatase from Corynebacterium efficiens (strain DSM 44549 / YS-314 / AJ 12310 / JCM 11189 / NBRC 100395).